Consider the following 276-residue polypeptide: Bifunctional esterase/perhydrolase DCH (276 aa).

One can recognise an AB hydrolase-1 domain in the interval Pro23–Phe254. Catalysis depends on residues Ser97, Asp227, and His256.

The protein belongs to the AB hydrolase superfamily. Bacterial non-heme haloperoxidase / perhydrolase family. In terms of assembly, homodimer.

It catalyses the reaction 3,4-dihydrocoumarin + H2O = 3-(2-hydroxyphenyl)propanoate + H(+). The catalysed reaction is peracetic acid + H2O = acetate + H2O2 + H(+). The enzyme catalyses a percarboxylic acid + H2O = a carboxylate + H2O2 + H(+). With respect to regulation, inhibited by the serine protease inhibitors diisopropyl fluorophosphate and phenylmethanesulfonyl fluoride. Its function is as follows. Multifunctional enzyme, which shows esterase and perhydrolase activities, and is capable of organic acid-assisted bromination of organic compounds. Catalyzes the hydrolysis of 3,4-dihydrocoumarin. Aromatic lactones other than 3,4-dihydrocoumarin, such as 2-coumaranone and homogentisic acid lactone, are also substrates, but their activities relative to that of 3,4-dihydrocoumarin are quite low. Also catalyzes the hydrolysis of several linear esters, with specificity toward methyl esters. In addition, shows perhydrolase activity and catalyzes the dose- and time-dependent degradation of peracetic acid, a broad-spectrum biocide, to acetic acid and hydrogen peroxide. It suggests that in vivo DCH may play a role in the oxidative stress defense system and detoxify peroxoacids in conjunction with the catalase, i.e. peroxoacids are first hydrolyzed to the corresponding acids and hydrogen peroxide by DCH, and then the resulting hydrogen peroxide is degraded by the catalase. Also shows organic acid-assisted bromination activity toward monochlorodimedon when incubated with hydrogen peroxide and dihydrocoumarin or an organic acid, such as acetate and n-butyrate. The protein is Bifunctional esterase/perhydrolase DCH of Acinetobacter calcoaceticus.